Consider the following 426-residue polypeptide: Glucan 1,3-beta-glucosidase (426 aa).

Positions 1-20 (MLYPRALLPAAVALASLVLA) are cleaved as a signal peptide. Residue Glu-208 is the Proton donor of the active site. 2 cysteine pairs are disulfide-bonded: Cys-290/Cys-416 and Cys-315/Cys-343. The active-site Nucleophile is the Glu-307.

Belongs to the glycosyl hydrolase 5 (cellulase A) family.

The protein localises to the secreted. The catalysed reaction is Successive hydrolysis of beta-D-glucose units from the non-reducing ends of (1-&gt;3)-beta-D-glucans, releasing alpha-glucose.. Functionally, beta-glucanases participate in the metabolism of beta-glucan, the main structural component of the cell wall. It could also function biosynthetically as a transglycosylase. This chain is Glucan 1,3-beta-glucosidase, found in Blumeria graminis (Powdery mildew).